A 100-amino-acid chain; its full sequence is ATP synthase subunit c (100 aa).

A run of 2 helical transmembrane segments spans residues 27–47 (SVIA…IGMG) and 72–92 (FIAL…TLIV).

This sequence belongs to the ATPase C chain family. As to quaternary structure, F-type ATPases have 2 components, F(1) - the catalytic core - and F(0) - the membrane proton channel. F(1) has five subunits: alpha(3), beta(3), gamma(1), delta(1), epsilon(1). F(0) has three main subunits: a(1), b(2) and c(10-14). The alpha and beta chains form an alternating ring which encloses part of the gamma chain. F(1) is attached to F(0) by a central stalk formed by the gamma and epsilon chains, while a peripheral stalk is formed by the delta and b chains.

The protein localises to the cell inner membrane. F(1)F(0) ATP synthase produces ATP from ADP in the presence of a proton or sodium gradient. F-type ATPases consist of two structural domains, F(1) containing the extramembraneous catalytic core and F(0) containing the membrane proton channel, linked together by a central stalk and a peripheral stalk. During catalysis, ATP synthesis in the catalytic domain of F(1) is coupled via a rotary mechanism of the central stalk subunits to proton translocation. In terms of biological role, key component of the F(0) channel; it plays a direct role in translocation across the membrane. A homomeric c-ring of between 10-14 subunits forms the central stalk rotor element with the F(1) delta and epsilon subunits. In Campylobacter concisus (strain 13826), this protein is ATP synthase subunit c.